A 300-amino-acid chain; its full sequence is Ribosomal protein bS6--L-glutamate ligase (300 aa).

One can recognise an ATP-grasp domain in the interval 104 to 287 (MQLLARQGID…IAGKMIRWIE (184 aa)). ATP is bound by residues Lys-141, 178-179 (EY), Asp-187, and 211-213 (RSN). 3 residues coordinate Mg(2+): Asp-248, Glu-260, and Asn-262. Mn(2+) contacts are provided by Asp-248, Glu-260, and Asn-262.

Belongs to the RimK family. Mg(2+) is required as a cofactor. Mn(2+) serves as cofactor.

An L-glutamate ligase that catalyzes the ATP-dependent post-translational addition of glutamate residues to the C-terminus of ribosomal protein bS6 (RpsF). Is also able to catalyze the synthesis of poly-alpha-glutamate in vitro, via ATP hydrolysis from unprotected glutamate as substrate. The number of glutamate residues added to either RpsF or to poly-alpha-glutamate changes with pH. In Shigella dysenteriae serotype 1 (strain Sd197), this protein is Ribosomal protein bS6--L-glutamate ligase.